Here is a 394-residue protein sequence, read N- to C-terminus: GDNF family receptor alpha-like (394 aa).

A signal peptide spans 1–19 (MLVFIFLAVRLSSENESSS). Topologically, residues 20-350 (QTNDCAYFMR…LTGFNSPFSG (331 aa)) are extracellular. 3 N-linked (GlcNAc...) asparagine glycosylation sites follow: Asn-65, Asn-101, and Asn-115. 11 cysteine pairs are disulfide-bonded: Cys-132-Cys-190, Cys-139-Cys-145, Cys-156-Cys-168, Cys-163-Cys-211, Cys-192-Cys-199, Cys-221-Cys-292, Cys-228-Cys-234, Cys-245-Cys-276, Cys-253-Cys-259, Cys-270-Cys-317, and Cys-294-Cys-305. Residues 150-229 (ALYLKACTAN…TCLSVIHTCR (80 aa)) form a required for interaction with GDF15 region. A helical membrane pass occupies residues 351–371 (ELIYVVVCMVVTSGILSLVML). The Cytoplasmic segment spans residues 372-394 (KLRIPSKKRDPAPIEIAGAVIIQ).

It belongs to the GDNFR family. Interacts (via the extracellular domain) with GDF15 and RET; receptor of GDF15, mediates cellular signaling through interaction with RET after GDF15-binding. Interaction with RET requires previous GDF15-binding. Cleaved and inactivated by MMP14, inhibiting the GDF15-GFRAL aversive response. As to expression, expressed in the brainstem, restricted to cells in the area postrema and the immediately adjacent region of the nucleus tractus solitarius. Detected at low levels in testis.

The protein localises to the cell membrane. Its function is as follows. Brainstem-restricted receptor for GDF15 hormone, which triggers an aversive response, characterized by nausea, vomiting, and/or loss of appetite in response to various stresses. The aversive response is both required to reduce continuing exposure to those stresses at the time of exposure and to promote avoidance behavior in the future. The GDF15-GFRAL aversive response is triggered by stresses, such as anticancer drugs (camptothecin or cisplatin), cancers or drugs such as metformin. Upon interaction with its ligand, GDF15, mediates the GDF15-induced autophosphorylation and activation of the RET tyrosine kinase receptor, leading to activation of MAPK- and AKT- signaling pathways. Ligand-binding activates GFRAL-expressing neurons localized in the area postrema and nucleus tractus solitarius of the brainstem. The GDF15-GFRAL signal induces expression of genes involved in metabolism, such as lipid metabolism in adipose tissues. The protein is GDNF family receptor alpha-like of Rattus norvegicus (Rat).